The primary structure comprises 511 residues: Probable pectinesterase/pectinesterase inhibitor 17 (511 aa).

The signal sequence occupies residues 1 to 23; that stretch reads MMAFRAYIINFVILCILVASTVS. The pectinesterase inhibitor 17 stretch occupies residues 24–171; that stretch reads GYNQKDVKAW…SNLLCNTLAI (148 aa). N-linked (GlcNAc...) asparagine glycosylation is found at N112 and N160. A pectinesterase 17 region spans residues 237 to 414; sequence VKQGVYSENL…LRPVLGSTKT (178 aa). The substrate site is built by T277 and Q307. Catalysis depends on D330, which acts as the Proton donor; for pectinesterase activity. Cysteines 344 and 364 form a disulfide. Residue D351 is the Nucleophile; for pectinesterase activity of the active site. Substrate is bound by residues R418 and W420.

In the N-terminal section; belongs to the PMEI family. The protein in the C-terminal section; belongs to the pectinesterase family. In terms of tissue distribution, expressed in siliques.

The protein localises to the secreted. Its subcellular location is the cell wall. It catalyses the reaction [(1-&gt;4)-alpha-D-galacturonosyl methyl ester](n) + n H2O = [(1-&gt;4)-alpha-D-galacturonosyl](n) + n methanol + n H(+). The protein operates within glycan metabolism; pectin degradation; 2-dehydro-3-deoxy-D-gluconate from pectin: step 1/5. Acts in the modification of cell walls via demethylesterification of cell wall pectin. This is Probable pectinesterase/pectinesterase inhibitor 17 (PME17) from Arabidopsis thaliana (Mouse-ear cress).